The sequence spans 315 residues: 4-hydroxy-3-methylbut-2-enyl diphosphate reductase (315 aa).

Position 12 (C12) interacts with [4Fe-4S] cluster. Positions 41 and 74 each coordinate (2E)-4-hydroxy-3-methylbut-2-enyl diphosphate. H41 and H74 together coordinate dimethylallyl diphosphate. 2 residues coordinate isopentenyl diphosphate: H41 and H74. Residue C96 participates in [4Fe-4S] cluster binding. H124 contacts (2E)-4-hydroxy-3-methylbut-2-enyl diphosphate. H124 provides a ligand contact to dimethylallyl diphosphate. H124 provides a ligand contact to isopentenyl diphosphate. Catalysis depends on E126, which acts as the Proton donor. Position 168 (T168) interacts with (2E)-4-hydroxy-3-methylbut-2-enyl diphosphate. C198 contacts [4Fe-4S] cluster. 4 residues coordinate (2E)-4-hydroxy-3-methylbut-2-enyl diphosphate: S226, S227, N228, and S270. Dimethylallyl diphosphate-binding residues include S226, S227, N228, and S270. 4 residues coordinate isopentenyl diphosphate: S226, S227, N228, and S270.

This sequence belongs to the IspH family. The cofactor is [4Fe-4S] cluster.

The enzyme catalyses isopentenyl diphosphate + 2 oxidized [2Fe-2S]-[ferredoxin] + H2O = (2E)-4-hydroxy-3-methylbut-2-enyl diphosphate + 2 reduced [2Fe-2S]-[ferredoxin] + 2 H(+). It catalyses the reaction dimethylallyl diphosphate + 2 oxidized [2Fe-2S]-[ferredoxin] + H2O = (2E)-4-hydroxy-3-methylbut-2-enyl diphosphate + 2 reduced [2Fe-2S]-[ferredoxin] + 2 H(+). The protein operates within isoprenoid biosynthesis; dimethylallyl diphosphate biosynthesis; dimethylallyl diphosphate from (2E)-4-hydroxy-3-methylbutenyl diphosphate: step 1/1. It participates in isoprenoid biosynthesis; isopentenyl diphosphate biosynthesis via DXP pathway; isopentenyl diphosphate from 1-deoxy-D-xylulose 5-phosphate: step 6/6. Functionally, catalyzes the conversion of 1-hydroxy-2-methyl-2-(E)-butenyl 4-diphosphate (HMBPP) into a mixture of isopentenyl diphosphate (IPP) and dimethylallyl diphosphate (DMAPP). Acts in the terminal step of the DOXP/MEP pathway for isoprenoid precursor biosynthesis. The polypeptide is 4-hydroxy-3-methylbut-2-enyl diphosphate reductase (Pseudomonas putida (strain ATCC 700007 / DSM 6899 / JCM 31910 / BCRC 17059 / LMG 24140 / F1)).